A 785-amino-acid chain; its full sequence is MLKVTTSRPWVCSRCVRRQVQSRRRLATASTQYRESRPVPVDNSAPGAKRDDRTLRQIFDSPNFWAEFSQSSKQSYNRPAVGLFQNRYLVNPQGFEVFANTSLRKAQRIVDKVLSASTVEEYRHVARELDRLSDLLCRVIDLSDFVRATHPNAAIQAAASRAYAKMFEYMNILNTTTGLDKQLEIAMATPEIVAGWTEEEVVVADILRKDFAKSAIDLPRAQRERFVALSQEISEIGPEFVDYMTPAKPYLTFESSKLKGMDPVLVRQYTTWGQTKIPTIGGAAAAAIRSVQNEDVRKEIFMATRTASRNTVYKLEELMRKRAELAKLSRYESYSHLALGDKMAKSPASVSQFLEALSKDNNQIVEGEVSELLKFKMSNSHGSSPGLQPWDKDYYMSQILASVRSHSRNSDFLSAYFSLGTVMQGLSRLFTRLYGVRLAPHETMPGETWNSDVRRLDVISETDGHVAVLYCDLFSRPGKSPNPAHFTLRCSREITTPELEEASSLSQNGLFKTNEEAANDGMATSRASGVLKQLPTIALICDFVTMSGKSSRPALLSFNEVQTLFHEMGHAIHSILGRTSLQNVSGTRCATDFAELPSVLMEHFAADPSVLSLFARHYETDQPLPYEMVAEKLALDKRFEGSDTENQIILSMLDLAYHSDLPLSPSFSSTQIYHSLQQKHGALPVDPPGTCWQGFFGHLFGYGSTYYSYLFDRVLARRIWQVVFKDGEAGGSIQRDNGEKMKEEVLKWGGGRDPWKCLAGVLDDGRVENGDEKAMAIVGSWGVKE.

Residues 1–26 (MLKVTTSRPWVCSRCVRRQVQSRRRL) constitute a mitochondrion transit peptide. Residues 26–51 (LATASTQYRESRPVPVDNSAPGAKRD) are disordered. Zn(2+) is bound at residue histidine 566. Glutamate 567 is an active-site residue. The Zn(2+) site is built by histidine 570 and histidine 573.

This sequence belongs to the peptidase M3 family. The cofactor is Zn(2+).

The protein resides in the mitochondrion matrix. It catalyses the reaction Release of an N-terminal octapeptide as second stage of processing of some proteins imported into the mitochondrion.. In terms of biological role, cleaves proteins, imported into the mitochondrion, to their mature size. While most mitochondrial precursor proteins are processed to the mature form in one step by mitochondrial processing peptidase (MPP), the sequential cleavage by MIP of an octapeptide after initial processing by MPP is a required step for a subgroup of nuclear-encoded precursor proteins destined for the matrix or the inner membrane. This is Mitochondrial intermediate peptidase (oct1) from Botryotinia fuckeliana (strain B05.10) (Noble rot fungus).